Consider the following 303-residue polypeptide: Mycothiol acetyltransferase (303 aa).

N-acetyltransferase domains lie at 3 to 152 (VTVT…VSLP) and 155 to 303 (VRIR…MYRS). D35 is a binding site for 1D-myo-inositol 2-(L-cysteinylamino)-2-deoxy-alpha-D-glucopyranoside. 79–81 (LTV) is an acetyl-CoA binding site. 1D-myo-inositol 2-(L-cysteinylamino)-2-deoxy-alpha-D-glucopyranoside contacts are provided by E182, K224, and E237. Residues 241–243 (VGV) and 248–254 (QGSGLGR) each bind acetyl-CoA. Y275 is a binding site for 1D-myo-inositol 2-(L-cysteinylamino)-2-deoxy-alpha-D-glucopyranoside.

Belongs to the acetyltransferase family. MshD subfamily. Monomer.

The enzyme catalyses 1D-myo-inositol 2-(L-cysteinylamino)-2-deoxy-alpha-D-glucopyranoside + acetyl-CoA = mycothiol + CoA + H(+). In terms of biological role, catalyzes the transfer of acetyl from acetyl-CoA to desacetylmycothiol (Cys-GlcN-Ins) to form mycothiol. The chain is Mycothiol acetyltransferase from Kocuria rhizophila (strain ATCC 9341 / DSM 348 / NBRC 103217 / DC2201).